We begin with the raw amino-acid sequence, 518 residues long: 2-isopropylmalate synthase (518 aa).

The region spanning 5-269 (IIVLDTTLRD…STNVRLKELI (265 aa)) is the Pyruvate carboxyltransferase domain. The Mn(2+) site is built by aspartate 14, histidine 204, histidine 206, and asparagine 240. A regulatory domain region spans residues 397–518 (ELDSFQVVTN…HDSQAPVSAR (122 aa)).

Belongs to the alpha-IPM synthase/homocitrate synthase family. LeuA type 1 subfamily. As to quaternary structure, homodimer. Requires Mn(2+) as cofactor.

It is found in the cytoplasm. The enzyme catalyses 3-methyl-2-oxobutanoate + acetyl-CoA + H2O = (2S)-2-isopropylmalate + CoA + H(+). Its pathway is amino-acid biosynthesis; L-leucine biosynthesis; L-leucine from 3-methyl-2-oxobutanoate: step 1/4. Catalyzes the condensation of the acetyl group of acetyl-CoA with 3-methyl-2-oxobutanoate (2-ketoisovalerate) to form 3-carboxy-3-hydroxy-4-methylpentanoate (2-isopropylmalate). The sequence is that of 2-isopropylmalate synthase from Geobacillus sp. (strain Y412MC10).